We begin with the raw amino-acid sequence, 486 residues long: O-methyltransferase gedA (486 aa).

Residues 298-299, Asp-321, 353-354, and Arg-369 each bind S-adenosyl-L-methionine; these read GG and SF. His-373 (proton acceptor) is an active-site residue.

The protein belongs to the class I-like SAM-binding methyltransferase superfamily. Cation-independent O-methyltransferase family.

It carries out the reaction emodin + S-adenosyl-L-methionine = questin + S-adenosyl-L-homocysteine + H(+). Its pathway is secondary metabolite biosynthesis. Its function is as follows. O-methyltransferase; part of the gene cluster that mediates the biosynthesis of geodin, an intermediate in the biosynthesis of other natural products. The pathway begins with the synthesis of atrochrysone thioester by the polyketide synthase (PKS) gedC. The atrochrysone carboxyl ACP thioesterase gedB then breaks the thioester bond and releases the atrochrysone carboxylic acid from gedC. The atrochrysone carboxylic acid is then converted to atrochrysone which is further transformed into emodinanthrone. The next step is performed by the emodinanthrone oxygenase gedH that catalyzes the oxidation of emodinanthrone to emodin. Emodin O-methyltransferase encoded probably by gedA then catalyzes methylation of the 8-hydroxy group of emodin to form questin. Ring cleavage of questin by questin oxidase gedK leads to desmethylsulochrin via several intermediates including questin epoxide. Another methylation step probably catalyzed by methyltransferase gedG leads to the formation of sulochrin which is further converted to dihydrogeodin by the sulochrin halogenase gedL. Finally, the dihydrogeodin oxidase gedJ catalyzes the stereospecific phenol oxidative coupling reaction converting dihydrogeodin to geodin. The protein is O-methyltransferase gedA of Aspergillus terreus (strain NIH 2624 / FGSC A1156).